We begin with the raw amino-acid sequence, 276 residues long: MKLCDFEVGLDQPLFLIAGPCVIESMQLQLDVAGKLKEITGKLGVNFIFKSSFDKANRTSGTSFRGPGLEEGLKVLDAVKKQIGVPVLTDVHEYTPMNEVAAVVDVLQTPAFLVRQTDFIKNVCAAGKPVNIKKGQFLAPWDMKPVVDKAKSTGNEQIMVCERGASFGYNNLVSDMRSLSVMRDTGCPVVFDATHSVQLPGGQGSSSGGQREFVPVLARAAVAVGISGLFAETHPDPSKALSDGPNAWPLDRMEELLETLMELDTVTKKHGFARFA.

The protein belongs to the KdsA family.

Its subcellular location is the cytoplasm. It catalyses the reaction D-arabinose 5-phosphate + phosphoenolpyruvate + H2O = 3-deoxy-alpha-D-manno-2-octulosonate-8-phosphate + phosphate. The protein operates within carbohydrate biosynthesis; 3-deoxy-D-manno-octulosonate biosynthesis; 3-deoxy-D-manno-octulosonate from D-ribulose 5-phosphate: step 2/3. It participates in bacterial outer membrane biogenesis; lipopolysaccharide biosynthesis. In Xanthomonas axonopodis pv. citri (strain 306), this protein is 2-dehydro-3-deoxyphosphooctonate aldolase.